Consider the following 202-residue polypeptide: ATP-dependent Clp protease proteolytic subunit (202 aa).

Ser-98 functions as the Nucleophile in the catalytic mechanism. Residue His-123 is part of the active site.

It belongs to the peptidase S14 family. As to quaternary structure, fourteen ClpP subunits assemble into 2 heptameric rings which stack back to back to give a disk-like structure with a central cavity, resembling the structure of eukaryotic proteasomes.

The protein localises to the cytoplasm. The catalysed reaction is Hydrolysis of proteins to small peptides in the presence of ATP and magnesium. alpha-casein is the usual test substrate. In the absence of ATP, only oligopeptides shorter than five residues are hydrolyzed (such as succinyl-Leu-Tyr-|-NHMec, and Leu-Tyr-Leu-|-Tyr-Trp, in which cleavage of the -Tyr-|-Leu- and -Tyr-|-Trp bonds also occurs).. In terms of biological role, cleaves peptides in various proteins in a process that requires ATP hydrolysis. Has a chymotrypsin-like activity. Plays a major role in the degradation of misfolded proteins. The chain is ATP-dependent Clp protease proteolytic subunit from Solidesulfovibrio magneticus (strain ATCC 700980 / DSM 13731 / RS-1) (Desulfovibrio magneticus).